Reading from the N-terminus, the 564-residue chain is E3 ubiquitin-protein ligase RNF168 (564 aa).

Residues 16–55 form an RING-type zinc finger; it reads CGICMEILVEPVTLPCNHTLCNPCFQSTVEKANLCCPFCR. Serine 70 carries the phosphoserine modification. An LR motif 1 motif is present at residues 110 to 128; the sequence is LSKPGELRREYEEEISKVE. Phosphoserine is present on serine 134. The UMI motif signature appears at 143–151; it reads EEYIQRLLA. 2 disordered regions span residues 149-179 and 193-291; these read LLAE…EELA and NILA…QGPE. Basic and acidic residues predominate over residues 157 to 179; that stretch reads EKRRTERRRSEMEEQLRGDEELA. Residues 168-191 carry the MIU motif 1 motif; the sequence is MEEQLRGDEELARRLSTSINSNYE. Serine 197 bears the Phosphoserine mark. Lysine 210 participates in a covalent cross-link: Glycyl lysine isopeptide (Lys-Gly) (interchain with G-Cter in SUMO2). The segment covering 242–259 has biased composition (basic and acidic residues); the sequence is KTEHGEDMCKSKETDSSD. Positions 275-288 are enriched in polar residues; sequence PTHSPQTCPETQGQ. Residues threonine 348 and threonine 361 each carry the phosphothreonine modification. A phosphoserine mark is found at serine 413 and serine 414. An MIU motif 2 motif is present at residues 438–461; sequence RHKQEEQDRLLALQLQKEADKEKM. The interval 455–564 is disordered; the sequence is EADKEKMVPN…QKSILQMFQR (110 aa). The LR motif 2 signature appears at 465 to 476; that stretch reads RQKGSPDQYQLR. A compositionally biased stretch (polar residues) spans 466 to 480; the sequence is QKGSPDQYQLRTSSP. The residue at position 469 (serine 469) is a Phosphoserine. The segment covering 491 to 515 has biased composition (basic and acidic residues); it reads NVKDRNSPKQTADRSKSQRSRKGEY. 2 stretches are compositionally biased toward polar residues: residues 519 to 531 and 555 to 564; these read FEST…NGTK and QKSILQMFQR. Lysine 524 is covalently cross-linked (Glycyl lysine isopeptide (Lys-Gly) (interchain with G-Cter in SUMO2)).

Belongs to the RNF168 family. As to quaternary structure, monomer. Interacts with UBE2N/UBC13. In terms of processing, sumoylated with SUMO1 by PIAS4 in response to double-strand breaks (DSBs). Ubiquitinated.

It localises to the nucleus. It catalyses the reaction S-ubiquitinyl-[E2 ubiquitin-conjugating enzyme]-L-cysteine + [acceptor protein]-L-lysine = [E2 ubiquitin-conjugating enzyme]-L-cysteine + N(6)-ubiquitinyl-[acceptor protein]-L-lysine.. The protein operates within protein modification; protein ubiquitination. Functionally, E3 ubiquitin-protein ligase required for accumulation of repair proteins to sites of DNA damage. Acts with UBE2N/UBC13 to amplify the RNF8-dependent histone ubiquitination. Recruited to sites of DNA damage at double-strand breaks (DSBs) by binding to ubiquitinated histone H2A and H2AX and amplifies the RNF8-dependent H2A ubiquitination, promoting the formation of 'Lys-63'-linked ubiquitin conjugates. This leads to concentrate ubiquitinated histones H2A and H2AX at DNA lesions to the threshold required for recruitment of TP53BP1 and BRCA1. Also recruited at DNA interstrand cross-links (ICLs) sites and promotes accumulation of 'Lys-63'-linked ubiquitination of histones H2A and H2AX, leading to recruitment of FAAP20 and Fanconi anemia (FA) complex, followed by interstrand cross-link repair. H2A ubiquitination also mediates the ATM-dependent transcriptional silencing at regions flanking DSBs in cis, a mechanism to avoid collision between transcription and repair intermediates. Also involved in class switch recombination in immune system, via its role in regulation of DSBs repair. Following DNA damage, promotes the ubiquitination and degradation of JMJD2A/KDM4A in collaboration with RNF8, leading to unmask H4K20me2 mark and promote the recruitment of TP53BP1 at DNA damage sites. Not able to initiate 'Lys-63'-linked ubiquitination in vitro; possibly due to partial occlusion of the UBE2N/UBC13-binding region. Catalyzes monoubiquitination of 'Lys-13' and 'Lys-15' of nucleosomal histone H2A (H2AK13Ub and H2AK15Ub, respectively). The protein is E3 ubiquitin-protein ligase RNF168 of Rattus norvegicus (Rat).